A 279-amino-acid polypeptide reads, in one-letter code: uncharacterized protein (279 aa).

The next 3 helical transmembrane spans lie at 31–51 (GYIAQALGIADVLAVAYFHAT), 67–87 (LLSIGHYAIALYAALIEAKII), and 115–135 (EITGGSLGHGLGIAVGMSLAL).

It belongs to the transketolase family. It depends on thiamine diphosphate as a cofactor.

It is found in the cell membrane. This is an uncharacterized protein from Sinorhizobium fredii (strain NBRC 101917 / NGR234).